The chain runs to 331 residues: MSDIQSLTTQALADVAAAQSPDVLEQLRVALLGKSGSITSQLKQLGALPADERKAAGEAINQARDALSHALGERKAVLEDAALDARLAAESIDITLPGRSAERAGLHPITRTLERITGIFGRLGYELSEGPEIEDDWHNFEALNFPPHHPARAMHDTFYFGDGRLLRTHTSGVQVRYMGDHAPPLRMIAAGKVYRSDSDQTHSPMFHQVEGLLVDEHSTFADLKGTLAEFVRAFFERDFEMRFRPSYFPFVEPGAEVDIAWQQPDGSTRWLEVLGCGMVHPNVLRNVGIDPERYTGFAFGMGVERFAMLRYGVNDLRAFFENDVRFLKQFA.

E252 lines the Mg(2+) pocket.

This sequence belongs to the class-II aminoacyl-tRNA synthetase family. Phe-tRNA synthetase alpha subunit type 1 subfamily. In terms of assembly, tetramer of two alpha and two beta subunits. Requires Mg(2+) as cofactor.

Its subcellular location is the cytoplasm. It catalyses the reaction tRNA(Phe) + L-phenylalanine + ATP = L-phenylalanyl-tRNA(Phe) + AMP + diphosphate + H(+). The sequence is that of Phenylalanine--tRNA ligase alpha subunit from Stenotrophomonas maltophilia (strain R551-3).